The following is a 140-amino-acid chain: Probable glycine cleavage system H protein 3 (140 aa).

One can recognise a Lipoyl-binding domain in the interval Val29 to Arg110. Lys70 bears the N6-lipoyllysine mark.

The protein belongs to the GcvH family. In terms of assembly, the glycine cleavage system is composed of four proteins: P, T, L and H. (R)-lipoate is required as a cofactor.

Its function is as follows. The glycine cleavage system catalyzes the degradation of glycine. The H protein shuttles the methylamine group of glycine from the P protein to the T protein. The protein is Probable glycine cleavage system H protein 3 of Saccharolobus solfataricus (strain ATCC 35092 / DSM 1617 / JCM 11322 / P2) (Sulfolobus solfataricus).